Consider the following 226-residue polypeptide: CASP-like protein 2BC1 (226 aa).

The Cytoplasmic segment spans residues Met-1–Glu-37. The helical transmembrane segment at Val-38–Ala-58 threads the bilayer. Topologically, residues Ser-59–Lys-78 are extracellular. A helical transmembrane segment spans residues Thr-79–Leu-99. Residues Arg-100 to Lys-114 lie on the Cytoplasmic side of the membrane. A helical transmembrane segment spans residues Ala-115–Ala-135. The Extracellular portion of the chain corresponds to Ala-136–Ala-170. The chain crosses the membrane as a helical span at residues Gly-171–Phe-191. Residues His-192–Ile-226 are Cytoplasmic-facing.

This sequence belongs to the Casparian strip membrane proteins (CASP) family. In terms of assembly, homodimer and heterodimers.

It is found in the cell membrane. The polypeptide is CASP-like protein 2BC1 (Picea sitchensis (Sitka spruce)).